The sequence spans 461 residues: Siroheme synthase (461 aa).

Residues 1 to 204 (MDYFPIFCQL…GDTTQAQQQV (204 aa)) are precorrin-2 dehydrogenase /sirohydrochlorin ferrochelatase. NAD(+)-binding positions include 22 to 23 (EV) and 43 to 44 (GR). Ser128 bears the Phosphoserine mark. Positions 216-461 (GEVTLVGAGP…NWFRCEAASA (246 aa)) are uroporphyrinogen-III C-methyltransferase. Pro225 contacts S-adenosyl-L-methionine. Asp248 functions as the Proton acceptor in the catalytic mechanism. Lys270 functions as the Proton donor in the catalytic mechanism. Residues 301 to 303 (GGD), Ile306, 331 to 332 (TA), Met382, and Gly411 each bind S-adenosyl-L-methionine.

The protein in the N-terminal section; belongs to the precorrin-2 dehydrogenase / sirohydrochlorin ferrochelatase family. It in the C-terminal section; belongs to the precorrin methyltransferase family.

It carries out the reaction uroporphyrinogen III + 2 S-adenosyl-L-methionine = precorrin-2 + 2 S-adenosyl-L-homocysteine + H(+). The catalysed reaction is precorrin-2 + NAD(+) = sirohydrochlorin + NADH + 2 H(+). The enzyme catalyses siroheme + 2 H(+) = sirohydrochlorin + Fe(2+). It participates in cofactor biosynthesis; adenosylcobalamin biosynthesis; precorrin-2 from uroporphyrinogen III: step 1/1. It functions in the pathway cofactor biosynthesis; adenosylcobalamin biosynthesis; sirohydrochlorin from precorrin-2: step 1/1. The protein operates within porphyrin-containing compound metabolism; siroheme biosynthesis; precorrin-2 from uroporphyrinogen III: step 1/1. Its pathway is porphyrin-containing compound metabolism; siroheme biosynthesis; siroheme from sirohydrochlorin: step 1/1. It participates in porphyrin-containing compound metabolism; siroheme biosynthesis; sirohydrochlorin from precorrin-2: step 1/1. In terms of biological role, multifunctional enzyme that catalyzes the SAM-dependent methylations of uroporphyrinogen III at position C-2 and C-7 to form precorrin-2 via precorrin-1. Then it catalyzes the NAD-dependent ring dehydrogenation of precorrin-2 to yield sirohydrochlorin. Finally, it catalyzes the ferrochelation of sirohydrochlorin to yield siroheme. This is Siroheme synthase from Edwardsiella ictaluri (strain 93-146).